A 144-amino-acid polypeptide reads, in one-letter code: Large ribosomal subunit protein uL15 (144 aa).

Residues 1 to 57 (MELNNIKPADGAKKDKRRVGRGIGSGLGKTAGRGHKGQKSRAGGFHKVGFEGGQMPM) are disordered. A compositionally biased stretch (gly residues) spans 21-31 (RGIGSGLGKTA).

The protein belongs to the universal ribosomal protein uL15 family. Part of the 50S ribosomal subunit.

Functionally, binds to the 23S rRNA. This chain is Large ribosomal subunit protein uL15, found in Thiobacillus denitrificans (strain ATCC 25259 / T1).